The primary structure comprises 341 residues: Protein-glutamate methylesterase/protein-glutamine glutaminase 2 (341 aa).

A Response regulatory domain is found at arginine 11–arginine 126. The residue at position 62 (aspartate 62) is a 4-aspartylphosphate. In terms of domain architecture, CheB-type methylesterase spans proline 152–arginine 341. Active-site residues include serine 166, histidine 193, and aspartate 285.

It belongs to the CheB family. Post-translationally, phosphorylated by CheA. Phosphorylation of the N-terminal regulatory domain activates the methylesterase activity.

The protein resides in the cytoplasm. The enzyme catalyses [protein]-L-glutamate 5-O-methyl ester + H2O = L-glutamyl-[protein] + methanol + H(+). The catalysed reaction is L-glutaminyl-[protein] + H2O = L-glutamyl-[protein] + NH4(+). Its function is as follows. Involved in chemotaxis. Part of a chemotaxis signal transduction system that modulates chemotaxis in response to various stimuli. Catalyzes the demethylation of specific methylglutamate residues introduced into the chemoreceptors (methyl-accepting chemotaxis proteins or MCP) by CheR. Also mediates the irreversible deamidation of specific glutamine residues to glutamic acid. This Anaeromyxobacter dehalogenans (strain 2CP-C) protein is Protein-glutamate methylesterase/protein-glutamine glutaminase 2.